The sequence spans 634 residues: uncharacterized protein (634 aa).

This is an uncharacterized protein from Homo sapiens (Human).